The primary structure comprises 194 residues: Imidazoleglycerol-phosphate dehydratase (194 aa).

The protein belongs to the imidazoleglycerol-phosphate dehydratase family.

The protein resides in the cytoplasm. It catalyses the reaction D-erythro-1-(imidazol-4-yl)glycerol 3-phosphate = 3-(imidazol-4-yl)-2-oxopropyl phosphate + H2O. It functions in the pathway amino-acid biosynthesis; L-histidine biosynthesis; L-histidine from 5-phospho-alpha-D-ribose 1-diphosphate: step 6/9. The sequence is that of Imidazoleglycerol-phosphate dehydratase from Thermoanaerobacter sp. (strain X514).